The sequence spans 694 residues: Polyphosphate kinase (694 aa).

N45 contacts ATP. 2 residues coordinate Mg(2+): R367 and R397. H427 serves as the catalytic Phosphohistidine intermediate. Positions 460, 553, and 580 each coordinate ATP.

Belongs to the polyphosphate kinase 1 (PPK1) family. Requires Mg(2+) as cofactor. In terms of processing, an intermediate of this reaction is the autophosphorylated ppk in which a phosphate is covalently linked to a histidine residue through a N-P bond.

The catalysed reaction is [phosphate](n) + ATP = [phosphate](n+1) + ADP. Its function is as follows. Catalyzes the reversible transfer of the terminal phosphate of ATP to form a long-chain polyphosphate (polyP). The polypeptide is Polyphosphate kinase (Campylobacter jejuni (strain RM1221)).